Here is a 262-residue protein sequence, read N- to C-terminus: uncharacterized protein (262 aa).

The protein belongs to the glycosyltransferase 2 family.

This is an uncharacterized protein from Mycobacterium tuberculosis (strain CDC 1551 / Oshkosh).